Consider the following 164-residue polypeptide: S-ribosylhomocysteine lyase (164 aa).

3 residues coordinate Fe cation: histidine 61, histidine 65, and cysteine 131.

This sequence belongs to the LuxS family. Homodimer. Requires Fe cation as cofactor.

The catalysed reaction is S-(5-deoxy-D-ribos-5-yl)-L-homocysteine = (S)-4,5-dihydroxypentane-2,3-dione + L-homocysteine. Its function is as follows. Involved in the synthesis of autoinducer 2 (AI-2) which is secreted by bacteria and is used to communicate both the cell density and the metabolic potential of the environment. The regulation of gene expression in response to changes in cell density is called quorum sensing. Catalyzes the transformation of S-ribosylhomocysteine (RHC) to homocysteine (HC) and 4,5-dihydroxy-2,3-pentadione (DPD). This Bifidobacterium longum subsp. infantis (strain ATCC 15697 / DSM 20088 / JCM 1222 / NCTC 11817 / S12) protein is S-ribosylhomocysteine lyase.